The chain runs to 297 residues: Thiosulfate sulfurtransferase (297 aa).

Lysine 14 bears the N6-acetyllysine; alternate mark. Lysine 14 is subject to N6-succinyllysine; alternate. A Rhodanese 1 domain is found at 25–143; it reads LGPGLRVLDA…WLKEGHPVTS (119 aa). An O-linked (GlcNAc) serine glycan is attached at serine 35. Residue serine 38 is modified to Phosphoserine. Position 136 is an N6-acetyllysine; alternate (lysine 136). An N6-succinyllysine; alternate modification is found at lysine 136. A hinge region spans residues 144–159; that stretch reads EPSRPEPAVFKATLDR. Position 163 is an N6-acetyllysine (lysine 163). Residues 173–288 enclose the Rhodanese 2 domain; sequence QSKRFQLVDS…WFHQAPPETR (116 aa). Lysine 175 carries the post-translational modification N6-acetyllysine; alternate. At lysine 175 the chain carries N6-succinyllysine; alternate. Arginine 187 serves as a coordination point for substrate. The residue at position 224 (lysine 224) is an N6-acetyllysine; alternate. Lysine 224 is modified (N6-succinyllysine; alternate). At lysine 236 the chain carries N6-acetyllysine. Lysine 237 bears the N6-acetyllysine; alternate mark. The residue at position 237 (lysine 237) is an N6-succinyllysine; alternate. The active-site Cysteine persulfide intermediate is cysteine 248. Residue lysine 250 participates in substrate binding.

Monomer.

Its subcellular location is the mitochondrion matrix. The enzyme catalyses thiosulfate + hydrogen cyanide = thiocyanate + sulfite + 2 H(+). Functionally, together with MRPL18, acts as a mitochondrial import factor for the cytosolic 5S rRNA. Only the nascent unfolded cytoplasmic form is able to bind to the 5S rRNA. Formation of iron-sulfur complexes and cyanide detoxification. Binds molecular oxygen and sulfur. In Cricetulus griseus (Chinese hamster), this protein is Thiosulfate sulfurtransferase (TST).